The primary structure comprises 644 residues: DNA mismatch repair protein MutL (644 aa).

Disordered regions lie at residues 338–390 and 416–445; these read RPNA…ERPA and QPQE…DDTQ. Composition is skewed to low complexity over residues 349–366 and 416–427; these read EATP…EASA and QPQEAAEEAAGT.

This sequence belongs to the DNA mismatch repair MutL/HexB family.

Its function is as follows. This protein is involved in the repair of mismatches in DNA. It is required for dam-dependent methyl-directed DNA mismatch repair. May act as a 'molecular matchmaker', a protein that promotes the formation of a stable complex between two or more DNA-binding proteins in an ATP-dependent manner without itself being part of a final effector complex. This chain is DNA mismatch repair protein MutL, found in Chromohalobacter salexigens (strain ATCC BAA-138 / DSM 3043 / CIP 106854 / NCIMB 13768 / 1H11).